Consider the following 265-residue polypeptide: Arginine and glutamate-rich protein 1 (265 aa).

Residues 1–54 (MGRSRSRSSSRSKHAKSGKHNKKRSRSREKERVRKRSKSRESKRNRRRESRSRS) show a composition bias toward basic residues. Positions 1 to 66 (MGRSRSRSSS…NTASRRERER (66 aa)) are necessary and sufficient for RNA binding. Residues 1–106 (MGRSRSRSSS…EKKAEYERQR (106 aa)) are disordered. 2 stretches are compositionally biased toward basic and acidic residues: residues 60 to 76 (SRRERERAASPPDRIDI) and 85 to 106 (SSLDEKQKREDEEKKAEYERQR). Positions 67-265 (AASPPDRIDI…KLSFSLKSPD (199 aa)) are necessary and sufficient for transcriptional regulation. Positions 164 to 168 (LLEEL) match the LXXLL motif 1; degenerate motif. The LXXLL motif 2; degenerate motif lies at 193 to 197 (LERIL). Residues 229 to 245 (RMKLEQERQRQQKEEQK) show a composition bias toward basic and acidic residues. Residues 229-265 (RMKLEQERQRQQKEEQKIILGKGKSRPKLSFSLKSPD) form a disordered region.

This sequence belongs to the ARGLU1 family.

The protein localises to the nucleus. The protein resides in the nucleus speckle. Its subcellular location is the chromosome. Its function is as follows. Dual function regulator of gene expression; regulator of transcription and modulator of alternative splicing. General coactivator of nuclear receptor-induced gene expression. The polypeptide is Arginine and glutamate-rich protein 1 (arglu1) (Xenopus tropicalis (Western clawed frog)).